The following is a 421-amino-acid chain: Testin (421 aa).

The PET domain maps to 92–199; it reads MILTNPVAAK…GDVKLPREMN (108 aa). Residues 133–164 are disordered; the sequence is EKQPVAGSEGAQYRKKQLAKQLPAHDQDPSKC. The segment covering 155 to 164 has biased composition (basic and acidic residues); sequence PAHDQDPSKC. LIM zinc-binding domains lie at 234-297, 299-359, and 362-421; these read YSCY…CDSE, PRCA…NHAV, and QGCH…KMMS.

The protein belongs to the prickle / espinas / testin family. In terms of assembly, interacts via LIM domain 1 with ZYX. Interacts (via LIM domain 3) with ENAH and VASP. Interacts with ALKBH4, talin, actin, alpha-actinin, GRIP1 and PXN. Interacts (via LIM domain 2) with ACTL7A (via N-terminus). Heterodimer with ACTL7A; the heterodimer interacts with ENAH to form a heterotrimer.

It is found in the cytoplasm. The protein resides in the cell junction. Its subcellular location is the focal adhesion. Functionally, scaffold protein that may play a role in cell adhesion, cell spreading and in the reorganization of the actin cytoskeleton. Plays a role in the regulation of cell proliferation. May act as a tumor suppressor. The chain is Testin (TES) from Sus scrofa (Pig).